The following is a 396-amino-acid chain: S-adenosylmethionine synthase (396 aa).

H14 provides a ligand contact to ATP. D16 contacts Mg(2+). Residue E42 participates in K(+) binding. L-methionine contacts are provided by E55 and Q98. The segment at 98–108 is flexible loop; sequence QSPDIALGVNE. ATP-binding positions include 174–176, 241–242, D250, 256–257, A273, and K277; these read DGK, RF, and RK. Residue D250 coordinates L-methionine. Residue K281 coordinates L-methionine.

Belongs to the AdoMet synthase family. Homotetramer; dimer of dimers. The cofactor is Mg(2+). It depends on K(+) as a cofactor.

The protein resides in the cytoplasm. It carries out the reaction L-methionine + ATP + H2O = S-adenosyl-L-methionine + phosphate + diphosphate. It functions in the pathway amino-acid biosynthesis; S-adenosyl-L-methionine biosynthesis; S-adenosyl-L-methionine from L-methionine: step 1/1. Its function is as follows. Catalyzes the formation of S-adenosylmethionine (AdoMet) from methionine and ATP. The overall synthetic reaction is composed of two sequential steps, AdoMet formation and the subsequent tripolyphosphate hydrolysis which occurs prior to release of AdoMet from the enzyme. The chain is S-adenosylmethionine synthase from Fervidobacterium nodosum (strain ATCC 35602 / DSM 5306 / Rt17-B1).